The sequence spans 1154 residues: MFSKNINKVRFNLTLMDEGEYYFDDYSAIFYPPSNTEEESWQKRIAGRILVCSSSMFFEPDDSKLPIMKFPYKDMSSIGAWLNSLSSAPPAHLPTPQPIPQSILSPSKPTPTPTPPIVVEQPSPTRSAFSRLLSFSSLTSKVTTPTPPTPTPTPPTPQPTSIAPTPTIATNPYTSFSVSPNPPSPLLSQLFEQAKPSFLASKGDIFYVKSSQVIEMKENSRNHPYIFKQYNNIDFKFSFNYVKQNIVLDVMKVFHNYSGKEKIQRDELIKQMVEDRENKIFFDITQLVDMNERNILELKCSKISPLVENPGRLLITNARLYFQPMNNIEENRLKNYSLQSIIRVLQRRHSLREIGLELFFDDGSSLFLKFNNTITRNQVYDLLVKHLCTNIMHINEQANYLLKWQNGIISNYDYLLYLNNLAGRTFNDLTQYPVFPWIIADYQSTTLDLNRNETFRDLSKPIGALNPTRLATFQDRYHQIPDDQPKFLYGTHYSTPAYVLYFLVRQVPEYMLRLQNGRFDSPNRMFYSIEETWNSVLNSTTDVKELIPEFYKPSFESSSSSRNGGGGDDDDNFENGIFLTNSENLPLGIRQDNNVINDIILPPWASSPKDFISKLHQALESEYVSQNLHHWIDLIFGYKQKGEEAVRANNLFYHLTYEGSIDIESITNPFEREGMEAQINEFGQTPRQIFKTPHPQRLPQQLRNQNLKIELSDLEQNINFIFDELNNCNINELNNDNDNNLNNNNNNNNNNNSNSNSNLNNNYIDSNINNNINNIENINSLNNENNENSNDKKNNSNSNSSDNIKNSNGFENNDNNFNNENENLNDENENLTFLGEERNNSNNWGSLNFLKFNQNIKLHKDKISALYLSNNSETIYSVSLDSCLKIYSLKEKRQIRSLNLCNLALSSFQLSKDEKYIIIGSWDNNIYVYSVGNGSISYSIPGHSDAVSCLKLHNNNILVSGSWDSSVKVWRTHRQSNGAISIEKTPIADFVDSDTEIRSIDISSNGTIFCAGSSDGYLYFYDLLTLQLIRRISCFFDELVCIKFTPDGSRIITACIDGSVKLIGIEGSEIFSFKVKGEIHCLDSDGSSLIIGTDRGLCLWSLTTGTEIKDSISPFLSQSSNESIHSLNVSINQSSNKPILLTGTEAGSISIWQQ.

2 disordered regions span residues H92–S123 and T139–T167. The span at P145 to Q158 shows a compositional bias: pro residues. The 96-residue stretch at D289 to V384 folds into the BEACH-type PH domain. Residues T389–R697 enclose the BEACH domain. Disordered regions lie at residues S554–N575, N739–N762, and N779–N825. 2 stretches are compositionally biased toward low complexity: residues N779–N788 and N795–E822. WD repeat units lie at residues L858–S897, L900–S939, G942–I980, D992–R1031, C1034–K1074, K1076–D1110, and S1119–Q1154.

This is BEACH domain-containing protein lvsF (lvsF) from Dictyostelium discoideum (Social amoeba).